The chain runs to 102 residues: uncharacterized protein (102 aa).

Residues 79-102 form a disordered region; the sequence is AELLHPSPAPMPPATHGRSAAPCS.

This is an uncharacterized protein from Homo sapiens (Human).